The sequence spans 205 residues: Holliday junction branch migration complex subunit RuvA (205 aa).

A domain I region spans residues 1–64 (MIAHLRGELV…EDALTLYGFL (64 aa)). The domain II stretch occupies residues 65–143 (TQAEYDLFEL…AVPAGGGGVP (79 aa)). The segment at 144-153 (DGLPVAVAPA) is flexible linker. A domain III region spans residues 153 to 205 (AGDAWAEASEALIALGYSRGEAAAALARVRAEAGEAPSVETLVRLALKQLYRG).

This sequence belongs to the RuvA family. Homotetramer. Forms an RuvA(8)-RuvB(12)-Holliday junction (HJ) complex. HJ DNA is sandwiched between 2 RuvA tetramers; dsDNA enters through RuvA and exits via RuvB. An RuvB hexamer assembles on each DNA strand where it exits the tetramer. Each RuvB hexamer is contacted by two RuvA subunits (via domain III) on 2 adjacent RuvB subunits; this complex drives branch migration. In the full resolvosome a probable DNA-RuvA(4)-RuvB(12)-RuvC(2) complex forms which resolves the HJ.

Its subcellular location is the cytoplasm. In terms of biological role, the RuvA-RuvB-RuvC complex processes Holliday junction (HJ) DNA during genetic recombination and DNA repair, while the RuvA-RuvB complex plays an important role in the rescue of blocked DNA replication forks via replication fork reversal (RFR). RuvA specifically binds to HJ cruciform DNA, conferring on it an open structure. The RuvB hexamer acts as an ATP-dependent pump, pulling dsDNA into and through the RuvAB complex. HJ branch migration allows RuvC to scan DNA until it finds its consensus sequence, where it cleaves and resolves the cruciform DNA. The sequence is that of Holliday junction branch migration complex subunit RuvA from Symbiobacterium thermophilum (strain DSM 24528 / JCM 14929 / IAM 14863 / T).